The following is a 63-amino-acid chain: Large ribosomal subunit protein uL30 (63 aa).

This sequence belongs to the universal ribosomal protein uL30 family. In terms of assembly, part of the 50S ribosomal subunit.

The chain is Large ribosomal subunit protein uL30 from Geobacillus stearothermophilus (Bacillus stearothermophilus).